The following is a 181-amino-acid chain: Adenylate kinase (181 aa).

10–15 contacts ATP; that stretch reads GAGKGT. Positions 30–59 are NMP; that stretch reads STGELFRKNIQDGTKLGVEAKRYLDAGDLV. AMP contacts are provided by residues Thr-31, Arg-36, 57-59, 85-88, and Gln-92; these read DLV and GYPR. The segment at 126 to 132 is LID; sequence GRGRADD. ATP is bound at residue Arg-127. AMP contacts are provided by Arg-129 and Arg-140. Gly-166 lines the ATP pocket.

This sequence belongs to the adenylate kinase family. As to quaternary structure, monomer.

It localises to the cytoplasm. The enzyme catalyses AMP + ATP = 2 ADP. It participates in purine metabolism; AMP biosynthesis via salvage pathway; AMP from ADP: step 1/1. Its function is as follows. Catalyzes the reversible transfer of the terminal phosphate group between ATP and AMP. Plays an important role in cellular energy homeostasis and in adenine nucleotide metabolism. The chain is Adenylate kinase from Mycobacterium ulcerans (strain Agy99).